The primary structure comprises 481 residues: Cysteine--tRNA ligase (481 aa).

Cys29 lines the Zn(2+) pocket. The 'HIGH' region motif lies at 31 to 41 (PTVYDYSHLGH). Positions 210, 235, and 239 each coordinate Zn(2+). The 'KMSKS' region signature appears at 272-276 (KMSKS). Lys275 contributes to the ATP binding site.

It belongs to the class-I aminoacyl-tRNA synthetase family. Monomer. It depends on Zn(2+) as a cofactor.

It is found in the cytoplasm. The catalysed reaction is tRNA(Cys) + L-cysteine + ATP = L-cysteinyl-tRNA(Cys) + AMP + diphosphate. The protein is Cysteine--tRNA ligase of Anaeromyxobacter sp. (strain K).